The primary structure comprises 58 residues: Lantibiotic macedovicin (58 aa).

Positions 1-25 are excised as a propeptide; sequence MMNATENQIFVETVSDQELEMLIGG. 2 positions are modified to 2,3-didehydrobutyrine: T33 and T35. 2 cross-links (beta-methyllanthionine (Thr-Cys)) span residues 33–38 and 35–57; these read TLTKDC and TKDC…CKNC. C46 and C54 are oxidised to a cystine.

Post-translationally, maturation of macedovicin involves the enzymatic dehydration of Thr-33 and Thr-35 into dehydrobutyrine residues, that can form a beta-methyllanthionine bond with Cys-38 and Cys-57, respectively. This is followed by membrane translocation and cleavage of the modified precursor.

The protein resides in the secreted. In terms of biological role, lanthionine-containing peptide antibiotic (lantibiotic) active on Gram-positive bacteria. Macedovicin inhibits a broad spectrum of lactic acid bacteria, several food spoilage species (e.g. Clostridium spp.) and oral streptococci. The bactericidal activity of lantibiotics is based on depolarization of energized bacterial cytoplasmic membranes, initiated by the formation of aqueous transmembrane pores. This Streptococcus macedonicus (strain ACA-DC 198) protein is Lantibiotic macedovicin.